Reading from the N-terminus, the 595-residue chain is Wee1-like protein kinase 1-B (595 aa).

Residues 1–17 show a composition bias toward polar residues; sequence MNVQPRNMNVQPRNMNV. The disordered stretch occupies residues 1–127; the sequence is MNVQPRNMNV…CPGTPPHKTF (127 aa). Over residues 111-122 the composition is skewed to pro residues; the sequence is PTSPIPECPGTP. Residue T186 is modified to Phosphothreonine; by cdk1. The 271-residue stretch at 248–518 folds into the Protein kinase domain; that stretch reads FHELEKIGSG…SVALVKHSVL (271 aa). Residues 254–262 and K277 each bind ATP; that span reads IGSGEFGSV. Catalysis depends on D375, which acts as the Proton acceptor. N380 and D412 together coordinate Mg(2+). Residues 526–563 adopt a coiled-coil conformation; that stretch reads AEQLRIELDAEKFKNALLQKELKKAQIAKAAAEERAHF.

It belongs to the protein kinase superfamily. Ser/Thr protein kinase family. WEE1 subfamily. In terms of assembly, interacts (when phosphorylated at Thr-186) with pin1. In terms of processing, phosphorylation at Thr-186 during M-phase by cdk1 inhibits the kinase activity and leads to interaction with pin1. As to expression, zygotically expressed. Present in oocytes and postgastrula embryos (at least until the tailbud stage). Expression begins at the midblastula stage and increases after the early gastrula stage.

The protein resides in the nucleus. The catalysed reaction is L-tyrosyl-[protein] + ATP = O-phospho-L-tyrosyl-[protein] + ADP + H(+). In terms of biological role, acts as a zygotic negative regulator of entry into mitosis (G2 to M transition) by protecting the nucleus from cytoplasmically activated cyclin B1-complexed cdk1 before the onset of mitosis by mediating phosphorylation of cdk1 on 'Tyr-15'. Specifically phosphorylates and inactivates cyclin B1-complexed cdk1 reaching a maximum during G2 phase and a minimum as cells enter M phase. Phosphorylation of cyclin B1-cdk1 occurs exclusively on 'Tyr-15' and phosphorylation of monomeric cdk1 does not occur. This is Wee1-like protein kinase 1-B (wee1-b) from Xenopus laevis (African clawed frog).